The sequence spans 456 residues: Exodeoxyribonuclease 7 large subunit (456 aa).

It belongs to the XseA family. Heterooligomer composed of large and small subunits.

It is found in the cytoplasm. It carries out the reaction Exonucleolytic cleavage in either 5'- to 3'- or 3'- to 5'-direction to yield nucleoside 5'-phosphates.. Functionally, bidirectionally degrades single-stranded DNA into large acid-insoluble oligonucleotides, which are then degraded further into small acid-soluble oligonucleotides. The sequence is that of Exodeoxyribonuclease 7 large subunit from Azotobacter vinelandii (strain DJ / ATCC BAA-1303).